The sequence spans 904 residues: Anoctamin-5 (904 aa).

Residues 1 to 290 (MVEQEGLTAK…HLIRNYFGEK (290 aa)) are Cytoplasmic-facing. A helical membrane pass occupies residues 291–311 (IGIYFVFLGYYTEMLLFAALV). Topologically, residues 312–371 (GLACFIYGLLSMENNRTSTEICDPDIGGQMIMCPLCDEVCDYWRLNTTCLHSKFSHLFDN) are extracellular. 3 N-linked (GlcNAc...) asparagine glycosylation sites follow: Asn-326, Asn-357, and Asn-371. A helical membrane pass occupies residues 372–392 (ESTVFFALFMGIWVTLFLEFW). The Cytoplasmic portion of the chain corresponds to 393–453 (KQRQARLEYE…CHRIPWYFVS (61 aa)). A helical transmembrane segment spans residues 454–474 (GTTVTFGMALLLSSMVSILIY). The Extracellular segment spans residues 475–502 (RLSVFATFASFMESEATLQSVKSFFTPQ). The chain crosses the membrane as a helical span at residues 503-523 (LATALSGSCLNCIVILILNFF). Residues 524 to 548 (YEKISAWITKMEIPRTHQEYESSLT) lie on the Cytoplasmic side of the membrane. The chain crosses the membrane as a helical span at residues 549–569 (LKMFLFQFVNYYSSCFYVAFF). The Extracellular portion of the chain corresponds to 570–667 (KGKFVGYPGS…RGLFYEYLET (98 aa)). The chain crosses the membrane as a helical span at residues 668 to 688 (VIQFGFATLFVASFPLAPLFA). The Cytoplasmic portion of the chain corresponds to 689–723 (LMNNIMGIRVDAWKLTTQYRRPVAAKAHSIGVWQD). The helical transmembrane segment at 724-744 (ILFGMAIVSVATNAFIVSFTS) threads the bilayer. Over 745-825 (DIIPRLVYFY…FWHVLAAKMT (81 aa)) the chain is Extracellular. 3 N-linked (GlcNAc...) asparagine glycosylation sites follow: Asn-759, Asn-769, and Asn-782. The helical transmembrane segment at 826-846 (FIIVMEHVVFLFKFLLAWLIP) threads the bilayer. Topologically, residues 847-904 (DVPKDVVEKIKREKLMTIKIIHDFELNKLKENLDVEYGNIMKNVLVDEDNSLKAKTTV) are cytoplasmic.

This sequence belongs to the anoctamin family. Highly expressed in skeletal muscle, bone tissues and thyroid gland.

It is found in the endoplasmic reticulum membrane. It localises to the cell membrane. In terms of biological role, plays a role in plasma membrane repair in a process involving annexins. Does not exhibit calcium-activated chloride channel (CaCC) activity. This is Anoctamin-5 (Ano5) from Mus musculus (Mouse).